The chain runs to 78 residues: Large ribosomal subunit protein bL28 (78 aa).

Residues 1 to 20 (MSRVCQVTGKGPVTGNNISH) form a disordered region.

It belongs to the bacterial ribosomal protein bL28 family.

This is Large ribosomal subunit protein bL28 from Pseudomonas putida (strain W619).